The following is a 440-amino-acid chain: D-serine dehydratase (440 aa).

Lys-116 bears the N6-(pyridoxal phosphate)lysine mark.

This sequence belongs to the serine/threonine dehydratase family. DsdA subfamily. As to quaternary structure, monomer. The cofactor is pyridoxal 5'-phosphate.

The catalysed reaction is D-serine = pyruvate + NH4(+). This is D-serine dehydratase from Salmonella agona (strain SL483).